A 307-amino-acid chain; its full sequence is Serine/threonine-protein phosphatase PP2A-5 catalytic subunit (307 aa).

D55, H57, D83, and N115 together coordinate Mn(2+). Catalysis depends on H116, which acts as the Proton donor. H165 and H239 together coordinate Mn(2+). L307 is modified (leucine methyl ester).

This sequence belongs to the PPP phosphatase family. PP-2A subfamily. In terms of assembly, PP2A consists of a common heterodimeric core enzyme, composed of a 36 kDa catalytic subunit (subunit C) and a 65 kDa constant regulatory subunit (subunit A), that associates with a variety of regulatory subunits such as subunits B (the R2/B/PR55/B55, R3/B''/PR72/PR130/PR59 and R5/B'/B56 families). Also interacts with CHIP and TAF12B. Interacts with B'THETA. Interacts with CLC-A, CLC-B, CLC-C and CLC-G. The cofactor is Mn(2+). In terms of processing, reversibly methyl esterified on Leu-307 by leucine carboxyl methyltransferase 1 (LCMT1) and pectin methylesterase 1 (PME1). Carboxyl methylation influences the affinity of the catalytic subunit for the different regulatory subunits, thereby modulating the PP2A holoenzyme's substrate specificity, enzyme activity and cellular localization. Phosphorylation of either threonine (by autophosphorylation-activated protein kinase) or tyrosine results in inactivation of the phosphatase. Auto-dephosphorylation has been suggested as a mechanism for reactivation. Post-translationally, ubiquitinated. CHIP-mediated ubiquitination enhances phosphatase activity after an abiotic stress such as low temperature or darkness.

The protein resides in the cytoplasm. The protein localises to the cytosol. Its subcellular location is the peroxisome. It catalyses the reaction O-phospho-L-seryl-[protein] + H2O = L-seryl-[protein] + phosphate. The catalysed reaction is O-phospho-L-threonyl-[protein] + H2O = L-threonyl-[protein] + phosphate. Its function is as follows. Associates with the serine/threonine-protein phosphatase PP2A regulatory subunits A and B' to positively regulates beta-oxidation of fatty acids and protoauxins in peroxisomes by dephosphorylating peroxisomal beta-oxidation-related proteins. Involved in the positive regulation of salt stress responses. May function by increasing chloride channel activities on vacuolar membranes. The sequence is that of Serine/threonine-protein phosphatase PP2A-5 catalytic subunit from Arabidopsis thaliana (Mouse-ear cress).